Consider the following 429-residue polypeptide: Adenylosuccinate synthetase (429 aa).

Residues 13–19 (GDEGKGK) and 41–43 (GHT) contribute to the GTP site. The active-site Proton acceptor is Asp-14. Mg(2+) contacts are provided by Asp-14 and Gly-41. Residues 14-17 (DEGK), 39-42 (NAGH), Thr-130, Arg-144, Gln-225, Thr-240, and Arg-304 each bind IMP. His-42 acts as the Proton donor in catalysis. 300–306 (ATTGRRR) serves as a coordination point for substrate. GTP-binding positions include Arg-306, 332 to 334 (KLD), and 417 to 419 (STG).

Belongs to the adenylosuccinate synthetase family. Homodimer. Mg(2+) is required as a cofactor.

It is found in the cytoplasm. The catalysed reaction is IMP + L-aspartate + GTP = N(6)-(1,2-dicarboxyethyl)-AMP + GDP + phosphate + 2 H(+). Its pathway is purine metabolism; AMP biosynthesis via de novo pathway; AMP from IMP: step 1/2. Plays an important role in the de novo pathway of purine nucleotide biosynthesis. Catalyzes the first committed step in the biosynthesis of AMP from IMP. The chain is Adenylosuccinate synthetase from Buchnera aphidicola subsp. Baizongia pistaciae (strain Bp).